A 317-amino-acid polypeptide reads, in one-letter code: Ribosomal RNA small subunit methyltransferase H (317 aa).

Residues 32-34 (GGH), Asp51, Phe78, Asp99, and Gln106 contribute to the S-adenosyl-L-methionine site.

Belongs to the methyltransferase superfamily. RsmH family.

Its subcellular location is the cytoplasm. The catalysed reaction is cytidine(1402) in 16S rRNA + S-adenosyl-L-methionine = N(4)-methylcytidine(1402) in 16S rRNA + S-adenosyl-L-homocysteine + H(+). Its function is as follows. Specifically methylates the N4 position of cytidine in position 1402 (C1402) of 16S rRNA. In Helicobacter hepaticus (strain ATCC 51449 / 3B1), this protein is Ribosomal RNA small subunit methyltransferase H.